Consider the following 284-residue polypeptide: Isopentenyl-diphosphate delta-isomerase (284 aa).

K77 serves as a coordination point for substrate. H81 and H92 together coordinate Mg(2+). The Nudix hydrolase domain maps to 90 to 256 (LLHRAFSVFL…SLVFTPWFKL (167 aa)). Substrate contacts are provided by R111 and K115. The active site involves C127. A substrate-binding site is contributed by S128. Residues 128-172 (SHPLCVPSELGVDSSLEGSKDVNNLTNAVKGAKVAAQRKLEHELG) carry the Nudix box motif. Residues E204 and E206 each coordinate Mg(2+). Residue E206 is part of the active site.

This sequence belongs to the IPP isomerase type 1 family. Mg(2+) serves as cofactor.

The protein resides in the cytoplasm. The enzyme catalyses isopentenyl diphosphate = dimethylallyl diphosphate. The protein operates within isoprenoid biosynthesis; dimethylallyl diphosphate biosynthesis; dimethylallyl diphosphate from isopentenyl diphosphate: step 1/1. Isopentenyl-diphosphate delta-isomerase; part of the second module of ergosterol biosynthesis pathway that includes the middle steps of the pathway. IDI1 catalyzes the 1,3-allylic rearrangement of isopentenyl (IPP) to its highly electrophilic allylic isomer, dimethylallyl diphosphate (DMAPP). The second module is carried out in the vacuole and involves the formation of farnesyl diphosphate, which is also an important intermediate in the biosynthesis of ubiquinone, dolichol, heme and prenylated proteins. Activity by the mevalonate kinase ERG12 first converts mevalonate into 5-phosphomevalonate. 5-phosphomevalonate is then further converted to 5-diphosphomevalonate by the phosphomevalonate kinase ERG8. The diphosphomevalonate decarboxylase MVD then produces isopentenyl diphosphate. The isopentenyl-diphosphate delta-isomerase IDI1 then catalyzes the 1,3-allylic rearrangement of the homoallylic substrate isopentenyl (IPP) to its highly electrophilic allylic isomer, dimethylallyl diphosphate (DMAPP). Finally the farnesyl diphosphate synthase ERG20 catalyzes the sequential condensation of isopentenyl pyrophosphate with dimethylallyl pyrophosphate, and then with the resultant geranylpyrophosphate to the ultimate product farnesyl pyrophosphate. The sequence is that of Isopentenyl-diphosphate delta-isomerase from Candida albicans (strain SC5314 / ATCC MYA-2876) (Yeast).